We begin with the raw amino-acid sequence, 279 residues long: Small ribosomal subunit protein uS2 (279 aa).

Composition is skewed to acidic residues over residues 1–18 (MTENDNEVVEVVDDDEAV), 28–42 (TATEAEADTETDESN), and 65–81 (ADAEPDDELEGPTFDED). Residues 1 to 81 (MTENDNEVVE…ELEGPTFDED (81 aa)) are disordered.

Belongs to the universal ribosomal protein uS2 family.

In Haloquadratum walsbyi (strain DSM 16790 / HBSQ001), this protein is Small ribosomal subunit protein uS2.